Here is a 565-residue protein sequence, read N- to C-terminus: Sulfite reductase [NADPH] hemoprotein beta-component (565 aa).

Residues Cys-429, Cys-435, Cys-474, and Cys-478 each coordinate [4Fe-4S] cluster. Cys-478 contacts siroheme.

Belongs to the nitrite and sulfite reductase 4Fe-4S domain family. As to quaternary structure, alpha(8)-beta(8). The alpha component is a flavoprotein, the beta component is a hemoprotein. Siroheme serves as cofactor. The cofactor is [4Fe-4S] cluster.

The catalysed reaction is hydrogen sulfide + 3 NADP(+) + 3 H2O = sulfite + 3 NADPH + 4 H(+). The protein operates within sulfur metabolism; hydrogen sulfide biosynthesis; hydrogen sulfide from sulfite (NADPH route): step 1/1. Its function is as follows. Component of the sulfite reductase complex that catalyzes the 6-electron reduction of sulfite to sulfide. This is one of several activities required for the biosynthesis of L-cysteine from sulfate. The protein is Sulfite reductase [NADPH] hemoprotein beta-component of Shewanella loihica (strain ATCC BAA-1088 / PV-4).